A 386-amino-acid polypeptide reads, in one-letter code: Glucose-1-phosphate adenylyltransferase (386 aa).

Alpha-D-glucose 1-phosphate-binding positions include Tyr99, Gly164, 179-180 (EK), and Ser190.

It belongs to the bacterial/plant glucose-1-phosphate adenylyltransferase family. In terms of assembly, homotetramer.

The catalysed reaction is alpha-D-glucose 1-phosphate + ATP + H(+) = ADP-alpha-D-glucose + diphosphate. Its pathway is glycan biosynthesis; glycogen biosynthesis. Its function is as follows. Involved in the biosynthesis of ADP-glucose, a building block required for the elongation reactions to produce glycogen. Catalyzes the reaction between ATP and alpha-D-glucose 1-phosphate (G1P) to produce pyrophosphate and ADP-Glc. This Clostridioides difficile (strain 630) (Peptoclostridium difficile) protein is Glucose-1-phosphate adenylyltransferase.